We begin with the raw amino-acid sequence, 288 residues long: Bifunctional protein FolD (288 aa).

NADP(+) is bound by residues 166-168 (GAS) and isoleucine 232.

Belongs to the tetrahydrofolate dehydrogenase/cyclohydrolase family. As to quaternary structure, homodimer.

It catalyses the reaction (6R)-5,10-methylene-5,6,7,8-tetrahydrofolate + NADP(+) = (6R)-5,10-methenyltetrahydrofolate + NADPH. The catalysed reaction is (6R)-5,10-methenyltetrahydrofolate + H2O = (6R)-10-formyltetrahydrofolate + H(+). Its pathway is one-carbon metabolism; tetrahydrofolate interconversion. Catalyzes the oxidation of 5,10-methylenetetrahydrofolate to 5,10-methenyltetrahydrofolate and then the hydrolysis of 5,10-methenyltetrahydrofolate to 10-formyltetrahydrofolate. The chain is Bifunctional protein FolD from Acidithiobacillus ferrooxidans (strain ATCC 23270 / DSM 14882 / CIP 104768 / NCIMB 8455) (Ferrobacillus ferrooxidans (strain ATCC 23270)).